A 472-amino-acid polypeptide reads, in one-letter code: Ribulose bisphosphate carboxylase large chain (472 aa).

Residues Asn-116 and Thr-166 each contribute to the substrate site. The active-site Proton acceptor is the Lys-168. A substrate-binding site is contributed by Lys-170. Positions 194, 196, and 197 each coordinate Mg(2+). The residue at position 194 (Lys-194) is an N6-carboxylysine. Residue His-287 is the Proton acceptor of the active site. Substrate contacts are provided by Arg-288, His-320, and Ser-372.

Belongs to the RuBisCO large chain family. Type I subfamily. Heterohexadecamer of 8 large chains and 8 small chains. Requires Mg(2+) as cofactor.

It catalyses the reaction 2 (2R)-3-phosphoglycerate + 2 H(+) = D-ribulose 1,5-bisphosphate + CO2 + H2O. It carries out the reaction D-ribulose 1,5-bisphosphate + O2 = 2-phosphoglycolate + (2R)-3-phosphoglycerate + 2 H(+). Its function is as follows. RuBisCO catalyzes two reactions: the carboxylation of D-ribulose 1,5-bisphosphate, the primary event in carbon dioxide fixation, as well as the oxidative fragmentation of the pentose substrate. Both reactions occur simultaneously and in competition at the same active site. This Nitrobacter vulgaris protein is Ribulose bisphosphate carboxylase large chain.